We begin with the raw amino-acid sequence, 213 residues long: uncharacterized protein (213 aa).

This is an uncharacterized protein from Magallana gigas (Pacific oyster).